We begin with the raw amino-acid sequence, 303 residues long: Phosphatidylglycerol--prolipoprotein diacylglyceryl transferase (303 aa).

4 helical membrane-spanning segments follow: residues 18–38 (LGPF…LVGL), 58–78 (LLPI…VAFE), 106–126 (IWGG…SIIF), and 133–153 (EHFW…QAIG). Arg154 provides a ligand contact to a 1,2-diacyl-sn-glycero-3-phospho-(1'-sn-glycerol). Transmembrane regions (helical) follow at residues 193–213 (PTFL…IFLF), 223–243 (LPPG…RFWI), and 266–286 (IAQL…WRIY).

This sequence belongs to the Lgt family.

It localises to the cell inner membrane. It catalyses the reaction L-cysteinyl-[prolipoprotein] + a 1,2-diacyl-sn-glycero-3-phospho-(1'-sn-glycerol) = an S-1,2-diacyl-sn-glyceryl-L-cysteinyl-[prolipoprotein] + sn-glycerol 1-phosphate + H(+). It participates in protein modification; lipoprotein biosynthesis (diacylglyceryl transfer). Functionally, catalyzes the transfer of the diacylglyceryl group from phosphatidylglycerol to the sulfhydryl group of the N-terminal cysteine of a prolipoprotein, the first step in the formation of mature lipoproteins. The protein is Phosphatidylglycerol--prolipoprotein diacylglyceryl transferase of Prochlorococcus marinus (strain NATL2A).